The following is a 412-amino-acid chain: Adenylosuccinate synthetase (412 aa).

GTP-binding positions include glycine 12–lysine 18 and glycine 40–glutamate 42. Aspartate 13 serves as the catalytic Proton acceptor. Residues aspartate 13 and glycine 40 each contribute to the Mg(2+) site. IMP-binding positions include aspartate 13–lysine 16, asparagine 38–histidine 41, arginine 134, asparagine 212, threonine 227, and arginine 291. Histidine 41 (proton donor) is an active-site residue. Substrate is bound at residue threonine 287–arginine 293. Residues arginine 293, lysine 318–aspartate 320, and glycine 400–glycine 402 each bind GTP.

It belongs to the adenylosuccinate synthetase family. In terms of assembly, homodimer. It depends on Mg(2+) as a cofactor.

It is found in the cytoplasm. It catalyses the reaction IMP + L-aspartate + GTP = N(6)-(1,2-dicarboxyethyl)-AMP + GDP + phosphate + 2 H(+). It functions in the pathway purine metabolism; AMP biosynthesis via de novo pathway; AMP from IMP: step 1/2. Plays an important role in the de novo pathway and in the salvage pathway of purine nucleotide biosynthesis. Catalyzes the first committed step in the biosynthesis of AMP from IMP. This is Adenylosuccinate synthetase from Fusarium vanettenii (strain ATCC MYA-4622 / CBS 123669 / FGSC 9596 / NRRL 45880 / 77-13-4) (Fusarium solani subsp. pisi).